A 120-amino-acid polypeptide reads, in one-letter code: Flagellar protein FliT (120 aa).

A required for homodimerization region spans residues 1–50; it reads MERHQHLLSEYQQILTLSEQMLVLATEGNWDALVDLEMTYLKAVESTANI. The tract at residues 60–98 is fliD binding; that stretch reads LQDLLREKLRAILDNEIEIKRLLQLRLDRLSDLVGQSTK.

The protein belongs to the FliT family. In terms of assembly, homodimer. Interacts with FliD and FlhC.

The protein resides in the cytoplasm. It is found in the cytosol. Dual-function protein that regulates the transcription of class 2 flagellar operons and that also acts as an export chaperone for the filament-capping protein FliD. As a transcriptional regulator, acts as an anti-FlhDC factor; it directly binds FlhC, thus inhibiting the binding of the FlhC/FlhD complex to class 2 promoters, resulting in decreased expression of class 2 flagellar operons. As a chaperone, effects FliD transition to the membrane by preventing its premature polymerization, and by directing it to the export apparatus. This is Flagellar protein FliT from Yersinia enterocolitica serotype O:8 / biotype 1B (strain NCTC 13174 / 8081).